Reading from the N-terminus, the 126-residue chain is Holo-[acyl-carrier-protein] synthase (126 aa).

Mg(2+) contacts are provided by Asp9 and Glu58.

Belongs to the P-Pant transferase superfamily. AcpS family. The cofactor is Mg(2+).

It localises to the cytoplasm. The catalysed reaction is apo-[ACP] + CoA = holo-[ACP] + adenosine 3',5'-bisphosphate + H(+). Transfers the 4'-phosphopantetheine moiety from coenzyme A to a Ser of acyl-carrier-protein. This chain is Holo-[acyl-carrier-protein] synthase, found in Vibrio atlanticus (strain LGP32) (Vibrio splendidus (strain Mel32)).